Reading from the N-terminus, the 688-residue chain is Probable glucan endo-1,3-beta-glucosidase btgC (688 aa).

Disordered stretches follow at residues 1–49 (MSGP…MNGQ), 61–91 (DGRQ…NLGP), and 169–194 (QLTP…DIPY). Residues 1-307 (MSGPNRTYSF…PKPGGGNKKR (307 aa)) lie on the Cytoplasmic side of the membrane. Residues 175 to 188 (SVSHLSSTNPSQRN) show a composition bias toward polar residues. Residues 308–328 (GWIVGAILAFIIIGAIVGGAV) traverse the membrane as a helical; Signal-anchor for type II membrane protein segment. The Extracellular segment spans residues 329-688 (GGTIGHRGNE…IPDCGGKTAT (360 aa)). A disordered region spans residues 334–363 (HRGNEEPSSASSASSSSTQTATEDTSVNGD). Residues 341-355 (SSASSASSSSTQTAT) show a composition bias toward low complexity. Residues asparagine 408, asparagine 431, and asparagine 459 are each glycosylated (N-linked (GlcNAc...) asparagine). The active-site Proton donor is glutamate 491. Glutamate 590 (nucleophile) is an active-site residue. Asparagine 609 and asparagine 635 each carry an N-linked (GlcNAc...) asparagine glycan.

Belongs to the glycosyl hydrolase 17 family.

It localises to the cell membrane. The enzyme catalyses Hydrolysis of (1-&gt;3)-beta-D-glucosidic linkages in (1-&gt;3)-beta-D-glucans.. Its function is as follows. Glucanases play a role in cell expansion during growth, in cell-cell fusion during mating, and in spore release during sporulation. This enzyme may be involved in beta-glucan degradation. Active on laminarin and lichenan. The polypeptide is Probable glucan endo-1,3-beta-glucosidase btgC (btgC) (Aspergillus fumigatus (strain CBS 144.89 / FGSC A1163 / CEA10) (Neosartorya fumigata)).